The sequence spans 694 residues: Long-chain-fatty-acid--CoA ligase 4 (694 aa).

The segment at 1–21 (MTEQYSVAVGEAANEHETAPR) is disordered. Position 269-280 (269-280 (YTSGSTGTPKGV)) interacts with ATP. Positions 527 to 576 (DGWFRTGDIAEWTPKGQVKIIDRKKNLVKTLNGEYIALEKLESIYRSNPY) match the FACS motif.

The protein belongs to the ATP-dependent AMP-binding enzyme family. Interacts with FAT1. The cofactor is Mg(2+).

It is found in the lipid droplet. The catalysed reaction is a long-chain fatty acid + ATP + CoA = a long-chain fatty acyl-CoA + AMP + diphosphate. The enzyme catalyses (9Z)-hexadecenoate + ATP + CoA = (9Z)-hexadecenoyl-CoA + AMP + diphosphate. It catalyses the reaction (9Z)-octadecenoate + ATP + CoA = (9Z)-octadecenoyl-CoA + AMP + diphosphate. It carries out the reaction hexadecanoate + ATP + CoA = hexadecanoyl-CoA + AMP + diphosphate. Activates long-chain fatty acids (LCFA) by esterification of the fatty acids into metabolically active CoA-thioesters for subsequent degradation or incorporation into phospholipids. Also facilitates the transport of LCFAs into the cell, either by active transport or by decreasing the intracellular LCFA concentration. Contributes, with FAA1, to the activation of imported myristate. Also involved in long-chain base (LCB) uptake. In contrast ot LCFA uptake, LCB uptake does not require ATP, suggesting that the enzyme is directly involved in LCB uptake. Involved in the sphingolipid-to-glycerolipid metabolic pathway, converting the sphingolipid metabolite hexadecenoic acid to hexadecenoyl-CoA, which is then further converted to glycerolipids. In Saccharomyces cerevisiae (strain ATCC 204508 / S288c) (Baker's yeast), this protein is Long-chain-fatty-acid--CoA ligase 4 (FAA4).